The chain runs to 305 residues: Calponin-2 (305 aa).

Position 2 is an N-acetylserine (Ser2). 2 positions are modified to N6-acetyllysine: Lys8 and Lys25. Residues 28-132 (PQKEAELRSW…SLLALAGKAK (105 aa)) form the Calponin-homology (CH) domain. A Phosphoserine modification is found at Ser138. Calponin-like repeat units lie at residues 166 to 191 (IGLQ…RHLY), 206 to 231 (ISLQ…RHIY), and 245 to 269 (MSLQ…RQIY).

It belongs to the calponin family. In terms of tissue distribution, smooth muscle, and tissues containing significant amounts of smooth muscle.

Functionally, thin filament-associated protein that is implicated in the regulation and modulation of smooth muscle contraction. It is capable of binding to actin, calmodulin and tropomyosin. The interaction of calponin with actin inhibits the actomyosin Mg-ATPase activity. In Mus musculus (Mouse), this protein is Calponin-2 (Cnn2).